The following is a 144-amino-acid chain: Large ribosomal subunit protein uL15 (144 aa).

The disordered stretch occupies residues 1-52 (MRLNTISSAPGAKQAEKRVGRGIGSGWGKTCGRGHKGQKSRSGGFHKVGFEG). A compositionally biased stretch (gly residues) spans 21–31 (RGIGSGWGKTC).

It belongs to the universal ribosomal protein uL15 family. As to quaternary structure, part of the 50S ribosomal subunit.

Binds to the 23S rRNA. This is Large ribosomal subunit protein uL15 from Nitrosococcus oceani (strain ATCC 19707 / BCRC 17464 / JCM 30415 / NCIMB 11848 / C-107).